We begin with the raw amino-acid sequence, 1153 residues long: Cingulin (1153 aa).

The head stretch occupies residues 1 to 342; it reads MAEPRGPVDH…LVMTTGSAKV (342 aa). Residues 17–37 are disordered; sequence ITEPAGDAQMRTGRRPAKDAR. Positions 38–52 match the ZIM motif; that stretch reads ANTYGVAVRVQGIAG. The interval 44 to 57 is interaction with TJP1/ZO1; sequence AVRVQGIAGQPFVV. Residues Ser86, Ser126, Ser128, Ser131, Ser146, Ser205, Ser208, and Ser324 each carry the phosphoserine modification. Disordered stretches follow at residues 131–151 and 177–253; these read SLLG…LELG and DRHQ…SRAR. Basic and acidic residues predominate over residues 207–220; that stretch reads DSRHLRDPPEDRRS. Residues 343–1110 adopt a coiled-coil conformation; it reads LAGQGELAQK…ALEKDSWRKA (768 aa). The residue at position 562 (Lys562) is an N6-acetyllysine. Disordered stretches follow at residues 755–796, 823–861, and 1110–1131; these read AQRG…QKRL, QSQL…LSRL, and AARS…EEFD. Basic and acidic residues-rich tracts occupy residues 772-796 and 827-853; these read ALEE…QKRL and EDYK…EAEK. The tract at residues 1111 to 1153 is tail; the sequence is ARSAAESSLQQEGLSSDEEFDGVYNPNSIASLLTESGLQTSSC. Over residues 1115-1124 the composition is skewed to polar residues; that stretch reads AESSLQQEGL. Ser1125 and Ser1126 each carry phosphoserine.

Belongs to the cingulin family. As to quaternary structure, homodimer. Interacts with TJP1/ZO1 and SPEF1.

It is found in the cell junction. The protein localises to the tight junction. Its function is as follows. Probably plays a role in the formation and regulation of the tight junction (TJ) paracellular permeability barrier. This is Cingulin from Sorex araneus (Eurasian common shrew).